The chain runs to 435 residues: Glutamate-1-semialdehyde 2,1-aminomutase (435 aa).

Position 266 is an N6-(pyridoxal phosphate)lysine (Lys-266).

It belongs to the class-III pyridoxal-phosphate-dependent aminotransferase family. HemL subfamily. Homodimer. Pyridoxal 5'-phosphate is required as a cofactor.

It localises to the cytoplasm. The enzyme catalyses (S)-4-amino-5-oxopentanoate = 5-aminolevulinate. It functions in the pathway porphyrin-containing compound metabolism; protoporphyrin-IX biosynthesis; 5-aminolevulinate from L-glutamyl-tRNA(Glu): step 2/2. The polypeptide is Glutamate-1-semialdehyde 2,1-aminomutase (Coxiella burnetii (strain CbuG_Q212) (Coxiella burnetii (strain Q212))).